The following is a 112-amino-acid chain: ATP-dependent Clp protease adapter protein ClpS (112 aa).

The protein belongs to the ClpS family. In terms of assembly, binds to the N-terminal domain of the chaperone ClpA.

Functionally, involved in the modulation of the specificity of the ClpAP-mediated ATP-dependent protein degradation. The sequence is that of ATP-dependent Clp protease adapter protein ClpS from Rhodococcus opacus (strain B4).